Here is a 621-residue protein sequence, read N- to C-terminus: UvrABC system protein C (621 aa).

In terms of domain architecture, GIY-YIG spans 20 to 106 (TQSGIYQFFD…IKSLKPKYNI (87 aa)). Residues 212–247 (KALLKILESKMHTLSHNLQFEEAAIMRDRIQKITQM) enclose the UVR domain.

It belongs to the UvrC family. Interacts with UvrB in an incision complex.

The protein localises to the cytoplasm. The UvrABC repair system catalyzes the recognition and processing of DNA lesions. UvrC both incises the 5' and 3' sides of the lesion. The N-terminal half is responsible for the 3' incision and the C-terminal half is responsible for the 5' incision. The sequence is that of UvrABC system protein C from Helicobacter hepaticus (strain ATCC 51449 / 3B1).